Consider the following 560-residue polypeptide: Alpha-keto-acid decarboxylase (560 aa).

Position 61 (glutamate 61) interacts with thiamine diphosphate. The thiamine pyrophosphate binding stretch occupies residues 396–478; that stretch reads TSFYGMADHR…VVVNNDGYTV (83 aa). Mg(2+)-binding residues include aspartate 446, asparagine 473, and glycine 475.

Belongs to the TPP enzyme family. A metal cation is required as a cofactor. The cofactor is thiamine diphosphate.

In terms of biological role, decarboxylates branched-chain and aromatic alpha-keto acids to aldehydes. The chain is Alpha-keto-acid decarboxylase (kdc) from Mycobacterium bovis (strain ATCC BAA-935 / AF2122/97).